The following is a 140-amino-acid chain: Protein ApaG (140 aa).

One can recognise an ApaG domain in the interval 13 to 137; the sequence is EARTRDIVVR…FSLHLPGAAM (125 aa).

The polypeptide is Protein ApaG (Caulobacter vibrioides (strain ATCC 19089 / CIP 103742 / CB 15) (Caulobacter crescentus)).